The sequence spans 167 residues: Thioredoxin Y2, chloroplastic (167 aa).

The transit peptide at 1 to 58 directs the protein to the chloroplast; that stretch reads MAISLATAYISPCFTPESSNSASPSRTLSSVRLPSQIRRFGSVQSPSSSTRFAPLTVR. Positions 59–164 constitute a Thioredoxin domain; the sequence is AAKKQTFNSF…LVERIENSLQ (106 aa). Catalysis depends on nucleophile residues C88 and C91. An intrachain disulfide couples C88 to C91.

This sequence belongs to the thioredoxin family. Plant Y-type subfamily. Expressed in leaves.

It is found in the plastid. It localises to the chloroplast stroma. In terms of biological role, thiol-disulfide oxidoreductase that poorly activates chloroplastic malate dehydrogenase (NADP-MDH) and fructose-1,6-bisphosphatase. Provides reducing equivalents for peroxiredoxin Q. This Arabidopsis thaliana (Mouse-ear cress) protein is Thioredoxin Y2, chloroplastic.